The chain runs to 614 residues: Probable LRR receptor-like serine/threonine-protein kinase At5g45780 (614 aa).

The first 26 residues, 1 to 26 (MEISLMKFLFLGIWVYYYSVLDSVSA), serve as a signal peptide directing secretion. Residues 27 to 242 (MDSLLSPKGV…NSKHHSLVLS (216 aa)) are Extracellular-facing. 4 LRR repeats span residues 104-126 (HLHTLLLQNNQLTGPIPSELGQL), 128-151 (ELETLDLSGNRFSGEIPASLGFLT), 152-174 (HLNYLRLSRNLLSGQVPHLVAGL), and 176-197 (GLSFLDLSFNNLSGPTPNISAK). N-linked (GlcNAc...) asparagine glycans are attached at residues asparagine 186, asparagine 193, and asparagine 224. Residues 243–263 (FAFGIVVAFIISLMFLFFWVL) form a helical membrane-spanning segment. Residues 264-614 (WHRSRLSRSH…IEAIELSGPR (351 aa)) are Cytoplasmic-facing. A Phosphothreonine modification is found at threonine 297. In terms of domain architecture, Protein kinase spans 300 to 576 (FSPKNILGQG…QVLKVLEGLV (277 aa)). Residue 306-314 (LGQGGFGMV) coordinates ATP. The residue at position 323 (threonine 323) is a Phosphothreonine. Lysine 328 is a binding site for ATP. Serine 380 is subject to Phosphoserine. The Proton acceptor role is filled by aspartate 426. A phosphothreonine mark is found at threonine 459, threonine 460, and threonine 465. The residue at position 473 (tyrosine 473) is a Phosphotyrosine. The residue at position 475 (serine 475) is a Phosphoserine. Residue threonine 476 is modified to Phosphothreonine. Position 480 is a phosphoserine (serine 480). Residue threonine 555 is modified to Phosphothreonine.

Belongs to the protein kinase superfamily. Ser/Thr protein kinase family.

Its subcellular location is the membrane. It catalyses the reaction L-seryl-[protein] + ATP = O-phospho-L-seryl-[protein] + ADP + H(+). The enzyme catalyses L-threonyl-[protein] + ATP = O-phospho-L-threonyl-[protein] + ADP + H(+). This is Probable LRR receptor-like serine/threonine-protein kinase At5g45780 from Arabidopsis thaliana (Mouse-ear cress).